A 121-amino-acid chain; its full sequence is uncharacterized protein (121 aa).

In terms of domain architecture, Cupin type-2 spans 47-101; it reads SEVPHYHAEHDLTFTVLKGKGELYLEGEKKKLKEGDWAFIPKGAVHFYRNTSELS.

This is an uncharacterized protein from Aquifex aeolicus (strain VF5).